A 390-amino-acid polypeptide reads, in one-letter code: ATP-sensitive inward rectifier potassium channel 11 (390 aa).

The Cytoplasmic portion of the chain corresponds to 1–65 (MLSRKGIIPE…LQDVFTTLVD (65 aa)). Residues asparagine 48 and arginine 50 each coordinate ATP. A helical membrane pass occupies residues 66 to 92 (LKWPHTLLIFTMSFLCSWLLFAMAWWL). Over 93 to 116 (IAFAHGDLAPSEGTAEPCVTSIHS) the chain is Extracellular. Cysteine 110 and cysteine 142 are joined by a disulfide. The discontinuously helical; Pore-forming intramembrane region spans 117 to 133 (FSSAFLFSIEVQVTIGF). K(+) contacts are provided by threonine 130 and phenylalanine 133. Residues 130 to 135 (TIGFGG) carry the Selectivity filter motif. Residues 134–142 (GGRMVTEEC) lie on the Extracellular side of the membrane. Residues 143 to 171 (PLAILILIVQNIVGLMINAIMLGCIFMKT) traverse the membrane as a helical segment. Topologically, residues 172–390 (AQAHRRAETL…KFSISPDSLS (219 aa)) are cytoplasmic. Residue arginine 176 coordinates a 1,2-diacyl-sn-glycero-3-phospho-(1D-myo-inositol-4,5-bisphosphate). Residue tyrosine 330 coordinates ATP. Position 341 is a phosphothreonine; by MAPK1 (threonine 341). A Phosphoserine; by MAPK1 modification is found at serine 385.

Belongs to the inward rectifier-type potassium channel (TC 1.A.2.1) family. KCNJ11 subfamily. In terms of assembly, homotetramer; the homotetramer binds four ATP molecules (one ATP per subunit). Forms an heterooctamer with ABCC8/SUR1; one KCNJ11 homotetramer interacts with four ABCC8/SUR1 molecules. Interacts with ABCC9/SUR2. In terms of processing, phosphorylation by MAPK1 results in changes in channel gating that destabilize the closed states and reduce the ATP sensitivity.

Its subcellular location is the membrane. It carries out the reaction K(+)(in) = K(+)(out). KATP channels are regulated by cytoplasmic ATP/ADP ratios; ATP inhibits the channel by closing the pore, while ADP activates the channel. Activated by phosphatidylinositol 4,5-biphosphate (PtdIns(4,5)P2). In terms of biological role, inward rectifier potassium channel that forms the pore of ATP-sensitive potassium channels (KATP), regulating potassium permeability as a function of cytoplasmic ATP and ADP concentrations in many different cells. Inward rectifier potassium channels are characterized by a greater tendency to allow potassium to flow into the cell rather than out of it. Their voltage dependence is regulated by the concentration of extracellular potassium; as external potassium is raised, the voltage range of the channel opening shifts to more positive voltages. The inward rectification is mainly due to the blockage of outward current by internal magnesium. Can be blocked by extracellular barium. In pancreatic cells, it forms KATP channels with ABCC8/SUR1. Can form cardiac and smooth muscle-type KATP channels with ABCC9. This is ATP-sensitive inward rectifier potassium channel 11 (KCNJ11) from Homo sapiens (Human).